Reading from the N-terminus, the 328-residue chain is V-set and immunoglobulin domain-containing protein 2 (328 aa).

An N-terminal signal peptide occupies residues 1 to 24 (MAWPLVGAFLCGHLLGFVCLSGLA). An Ig-like V-type domain is found at 25-138 (VEVTVPTEPL…DFYTNGLGLI (114 aa)). The Extracellular portion of the chain corresponds to 25-244 (VEVTVPTEPL…VTDSSEGRVA (220 aa)). Cys-46 and Cys-122 are disulfide-bonded. Residues Asn-139, Asn-207, and Asn-232 are each glycosylated (N-linked (GlcNAc...) asparagine). The Ig-like C2-type domain maps to 145–234 (PPSHPLCSQS…GSASCELNLS (90 aa)). Cys-167 and Cys-218 are joined by a disulfide. Residues 245–265 (GTLIGVLLGVLLLSVAAFCLI) traverse the membrane as a helical segment. Residues 266 to 328 (RFQKERKKEP…TTKSKLSMVV (63 aa)) are Cytoplasmic-facing.

In terms of tissue distribution, expressed in the stomach, colon and prostate.

It localises to the membrane. In Mus musculus (Mouse), this protein is V-set and immunoglobulin domain-containing protein 2 (Vsig2).